We begin with the raw amino-acid sequence, 292 residues long: Probable septum site-determining protein MinC (292 aa).

The segment at 109 to 188 is disordered; sequence QVIDTAPPND…PQSSSALVIT (80 aa). Over residues 140–150 the composition is skewed to acidic residues; it reads QDDEADGEQAD. The segment covering 171 to 185 has biased composition (polar residues); that stretch reads ANRPTATPPQSSSAL.

This sequence belongs to the MinC family. In terms of assembly, interacts with MinD and FtsZ.

Functionally, cell division inhibitor that blocks the formation of polar Z ring septums. Rapidly oscillates between the poles of the cell to destabilize FtsZ filaments that have formed before they mature into polar Z rings. Prevents FtsZ polymerization. This chain is Probable septum site-determining protein MinC, found in Bordetella pertussis (strain Tohama I / ATCC BAA-589 / NCTC 13251).